Here is a 120-residue protein sequence, read N- to C-terminus: NAD(P)H-quinone oxidoreductase subunit 3 (120 aa).

3 helical membrane-spanning segments follow: residues 11–31 (LIFLLLSALVPVLALTISYLI), 64–84 (MFALVFVVFDVETVFLYPWAV), and 89–109 (LGLLAFIEALIFIAILVVALV).

This sequence belongs to the complex I subunit 3 family. As to quaternary structure, NDH-1 can be composed of about 15 different subunits; different subcomplexes with different compositions have been identified which probably have different functions.

It is found in the cell inner membrane. The catalysed reaction is a plastoquinone + NADH + (n+1) H(+)(in) = a plastoquinol + NAD(+) + n H(+)(out). It catalyses the reaction a plastoquinone + NADPH + (n+1) H(+)(in) = a plastoquinol + NADP(+) + n H(+)(out). Its function is as follows. NDH-1 shuttles electrons from an unknown electron donor, via FMN and iron-sulfur (Fe-S) centers, to quinones in the respiratory and/or the photosynthetic chain. The immediate electron acceptor for the enzyme in this species is believed to be plastoquinone. Couples the redox reaction to proton translocation, and thus conserves the redox energy in a proton gradient. Cyanobacterial NDH-1 also plays a role in inorganic carbon-concentration. This chain is NAD(P)H-quinone oxidoreductase subunit 3, found in Gloeobacter violaceus (strain ATCC 29082 / PCC 7421).